A 557-amino-acid chain; its full sequence is Formate--tetrahydrofolate ligase 2 (557 aa).

66 to 73 provides a ligand contact to ATP; that stretch reads TPAGEGKT.

It belongs to the formate--tetrahydrofolate ligase family.

The catalysed reaction is (6S)-5,6,7,8-tetrahydrofolate + formate + ATP = (6R)-10-formyltetrahydrofolate + ADP + phosphate. Its pathway is one-carbon metabolism; tetrahydrofolate interconversion. In Streptococcus pyogenes serotype M12 (strain MGAS9429), this protein is Formate--tetrahydrofolate ligase 2.